The sequence spans 1033 residues: Ubiquitin carboxyl-terminal hydrolase 48 (1033 aa).

One can recognise a USP domain in the interval V89 to Q419. C98 functions as the Nucleophile in the catalytic mechanism. Residue H351 is the Proton acceptor of the active site. DUSP domains lie at Q457–C552, N567–C690, and M710–A823. The segment at E610 to E639 is disordered. The segment at A878 to Q920 is disordered. The Ubiquitin-like domain occupies R931 to A1007.

The protein belongs to the peptidase C19 family.

The protein resides in the cytoplasm. It localises to the nucleus. It catalyses the reaction Thiol-dependent hydrolysis of ester, thioester, amide, peptide and isopeptide bonds formed by the C-terminal Gly of ubiquitin (a 76-residue protein attached to proteins as an intracellular targeting signal).. Its function is as follows. Recognizes and hydrolyzes the peptide bond at the C-terminal Gly of ubiquitin. Involved in the processing of poly-ubiquitin precursors as well as that of ubiquitinated proteins. The protein is Ubiquitin carboxyl-terminal hydrolase 48 (USP48) of Gallus gallus (Chicken).